A 636-amino-acid polypeptide reads, in one-letter code: Capsid vertex component 2 (636 aa).

Residues 1 to 48 (MSLLHTFWRLPVAVFFEPHEENVLRCPERVLRRLLEDAAVAMRGGGWR) are interaction with major capsid protein/MCP. The disordered stretch occupies residues 97 to 125 (DEGPSPRTLLQPPCRPRSSSPGTGVAGAS).

It belongs to the herpesviridae CVC2 protein family. In terms of assembly, heterodimerizes with CVC1. Interacts with major capsid protein/MCP and triplex capsid protein 1/TRX1 at the pentamer vertices. Interacts with the large tegument protein/LTP.

It is found in the virion. Its subcellular location is the host nucleus. In terms of biological role, capsid vertex-specific component that plays a role during viral DNA encapsidation, assuring correct genome cleavage and presumably stabilizing capsids that contain full-length viral genomes. Participates in the interaction between the capsid and the tegument through interaction with the large tegument protein/LTP. This chain is Capsid vertex component 2, found in Homo sapiens (Human).